A 551-amino-acid polypeptide reads, in one-letter code: Urocanate hydratase (551 aa).

Residues 48–49 (GG), Q126, 172–174 (GMG), E192, R197, 238–239 (NA), 259–263 (QTSAH), 269–270 (YI), and Y318 contribute to the NAD(+) site. Residue C406 is part of the active site. G488 contributes to the NAD(+) binding site.

This sequence belongs to the urocanase family. The cofactor is NAD(+).

Its subcellular location is the cytoplasm. The enzyme catalyses 4-imidazolone-5-propanoate = trans-urocanate + H2O. The protein operates within amino-acid degradation; L-histidine degradation into L-glutamate; N-formimidoyl-L-glutamate from L-histidine: step 2/3. Catalyzes the conversion of urocanate to 4-imidazolone-5-propionate. The sequence is that of Urocanate hydratase from Geobacillus kaustophilus (strain HTA426).